Here is a 136-residue protein sequence, read N- to C-terminus: Large ribosomal subunit protein uL16 (136 aa).

This sequence belongs to the universal ribosomal protein uL16 family. As to quaternary structure, part of the 50S ribosomal subunit.

In terms of biological role, binds 23S rRNA and is also seen to make contacts with the A and possibly P site tRNAs. The protein is Large ribosomal subunit protein uL16 of Pelagibacter ubique (strain HTCC1062).